A 77-amino-acid chain; its full sequence is DNA-directed RNA polymerase subunit omega (77 aa).

Belongs to the RNA polymerase subunit omega family. As to quaternary structure, the RNAP catalytic core consists of 2 alpha, 1 beta, 1 beta' and 1 omega subunit. When a sigma factor is associated with the core the holoenzyme is formed, which can initiate transcription.

It catalyses the reaction RNA(n) + a ribonucleoside 5'-triphosphate = RNA(n+1) + diphosphate. Functionally, promotes RNA polymerase assembly. Latches the N- and C-terminal regions of the beta' subunit thereby facilitating its interaction with the beta and alpha subunits. The polypeptide is DNA-directed RNA polymerase subunit omega (Dichelobacter nodosus (strain VCS1703A)).